Consider the following 167-residue polypeptide: Crossover junction endodeoxyribonuclease RuvC (167 aa).

Active-site residues include D7, E67, and D139. D7, E67, and D139 together coordinate Mg(2+).

The protein belongs to the RuvC family. Homodimer which binds Holliday junction (HJ) DNA. The HJ becomes 2-fold symmetrical on binding to RuvC with unstacked arms; it has a different conformation from HJ DNA in complex with RuvA. In the full resolvosome a probable DNA-RuvA(4)-RuvB(12)-RuvC(2) complex forms which resolves the HJ. It depends on Mg(2+) as a cofactor.

The protein localises to the cytoplasm. The enzyme catalyses Endonucleolytic cleavage at a junction such as a reciprocal single-stranded crossover between two homologous DNA duplexes (Holliday junction).. In terms of biological role, the RuvA-RuvB-RuvC complex processes Holliday junction (HJ) DNA during genetic recombination and DNA repair. Endonuclease that resolves HJ intermediates. Cleaves cruciform DNA by making single-stranded nicks across the HJ at symmetrical positions within the homologous arms, yielding a 5'-phosphate and a 3'-hydroxyl group; requires a central core of homology in the junction. The consensus cleavage sequence is 5'-(A/T)TT(C/G)-3'. Cleavage occurs on the 3'-side of the TT dinucleotide at the point of strand exchange. HJ branch migration catalyzed by RuvA-RuvB allows RuvC to scan DNA until it finds its consensus sequence, where it cleaves and resolves the cruciform DNA. This Zymomonas mobilis subsp. mobilis (strain ATCC 31821 / ZM4 / CP4) protein is Crossover junction endodeoxyribonuclease RuvC.